A 407-amino-acid polypeptide reads, in one-letter code: Imidazolonepropionase (407 aa).

2 residues coordinate Fe(3+): His74 and His76. Residues His74 and His76 each contribute to the Zn(2+) site. Arg83, Tyr146, and His179 together coordinate 4-imidazolone-5-propanoate. Tyr146 lines the N-formimidoyl-L-glutamate pocket. Fe(3+) is bound at residue His244. Zn(2+) is bound at residue His244. Gln247 is a binding site for 4-imidazolone-5-propanoate. Asp319 contacts Fe(3+). Asp319 is a binding site for Zn(2+). The N-formimidoyl-L-glutamate site is built by Asn321 and Gly323. Thr324 contributes to the 4-imidazolone-5-propanoate binding site.

It belongs to the metallo-dependent hydrolases superfamily. HutI family. Zn(2+) serves as cofactor. Requires Fe(3+) as cofactor.

It is found in the cytoplasm. The catalysed reaction is 4-imidazolone-5-propanoate + H2O = N-formimidoyl-L-glutamate. It participates in amino-acid degradation; L-histidine degradation into L-glutamate; N-formimidoyl-L-glutamate from L-histidine: step 3/3. Catalyzes the hydrolytic cleavage of the carbon-nitrogen bond in imidazolone-5-propanoate to yield N-formimidoyl-L-glutamate. It is the third step in the universal histidine degradation pathway. The chain is Imidazolonepropionase from Salmonella paratyphi C (strain RKS4594).